The chain runs to 202 residues: LexA repressor (202 aa).

Positions 32-52 (RAEVCSAFGFKSPNAAETHLR) form a DNA-binding region, H-T-H motif. Active-site for autocatalytic cleavage activity residues include Ser121 and Lys158.

The protein belongs to the peptidase S24 family. As to quaternary structure, homodimer.

The catalysed reaction is Hydrolysis of Ala-|-Gly bond in repressor LexA.. Represses a number of genes involved in the response to DNA damage (SOS response), including recA and lexA. In the presence of single-stranded DNA, RecA interacts with LexA causing an autocatalytic cleavage which disrupts the DNA-binding part of LexA, leading to derepression of the SOS regulon and eventually DNA repair. The chain is LexA repressor from Azoarcus sp. (strain BH72).